The sequence spans 868 residues: DNA mismatch repair protein MutS (868 aa).

Residue G620–S627 coordinates ATP.

This sequence belongs to the DNA mismatch repair MutS family.

This protein is involved in the repair of mismatches in DNA. It is possible that it carries out the mismatch recognition step. This protein has a weak ATPase activity. The polypeptide is DNA mismatch repair protein MutS (Xylella fastidiosa (strain 9a5c)).